The sequence spans 437 residues: 3-ketoacyl-CoA thiolase (437 aa).

The active-site Acyl-thioester intermediate is the Cys99. Residues His392 and Cys422 each act as proton acceptor in the active site.

This sequence belongs to the thiolase-like superfamily. Thiolase family. Heterotetramer of two alpha chains (FadJ) and two beta chains (FadI).

The protein resides in the cytoplasm. The enzyme catalyses an acyl-CoA + acetyl-CoA = a 3-oxoacyl-CoA + CoA. It functions in the pathway lipid metabolism; fatty acid beta-oxidation. In terms of biological role, catalyzes the final step of fatty acid oxidation in which acetyl-CoA is released and the CoA ester of a fatty acid two carbons shorter is formed. The sequence is that of 3-ketoacyl-CoA thiolase from Pectobacterium carotovorum subsp. carotovorum (strain PC1).